Here is a 343-residue protein sequence, read N- to C-terminus: WAT1-related protein At1g43650 (343 aa).

Helical transmembrane passes span 9-29 (MAMVFVQIVYAGMPLLSKVAI), 36-56 (FVFVFYRQAFAALALSPFAFF), 65-85 (LSFILLLKIFFISLCGLTLSL), 98-118 (TFAAATTNAIPSITFVLALLF), 130-150 (GVAKVTGSMVGMLGALVFAFV), 175-195 (SVKGSITMLAANTCWCLWIIM), 209-229 (LVALQCLFSCIQSAVWAVAVN), 239-259 (FGLPLLSMAYCGIMVTGLTYW), 272-292 (FTALYTPLALILTCIVSSFLF), and 296-316 (FYLGSVGGAVLLVCGLYLGLW). EamA domains are found at residues 16–139 (IVYA…GSMV) and 188–313 (CWCL…GLYL).

This sequence belongs to the drug/metabolite transporter (DMT) superfamily. Plant drug/metabolite exporter (P-DME) (TC 2.A.7.4) family.

It is found in the membrane. This chain is WAT1-related protein At1g43650, found in Arabidopsis thaliana (Mouse-ear cress).